The primary structure comprises 507 residues: L-threonine dehydratase biosynthetic IlvA (507 aa).

At Lys-52 the chain carries N6-(pyridoxal phosphate)lysine. Pyridoxal 5'-phosphate contacts are provided by residues Asn-79, 182–186, and Ser-309; that span reads GGGGL. 2 ACT-like domains span residues 333–404 and 427–498; these read AVFA…DLTH and RLFR…EESA.

The protein belongs to the serine/threonine dehydratase family. As to quaternary structure, homotetramer. Pyridoxal 5'-phosphate is required as a cofactor.

The enzyme catalyses L-threonine = 2-oxobutanoate + NH4(+). Its pathway is amino-acid biosynthesis; L-isoleucine biosynthesis; 2-oxobutanoate from L-threonine: step 1/1. Catalyzes the anaerobic formation of alpha-ketobutyrate and ammonia from threonine in a two-step reaction. The first step involved a dehydration of threonine and a production of enamine intermediates (aminocrotonate), which tautomerizes to its imine form (iminobutyrate). Both intermediates are unstable and short-lived. The second step is the nonenzymatic hydrolysis of the enamine/imine intermediates to form 2-ketobutyrate and free ammonia. In the low water environment of the cell, the second step is accelerated by RidA. This chain is L-threonine dehydratase biosynthetic IlvA (ilvA), found in Burkholderia multivorans (strain ATCC 17616 / 249).